The sequence spans 127 residues: Protein ApaG (127 aa).

Residues 3-127 (NERKYSIKVE…FILSVPRVLH (125 aa)) form the ApaG domain.

This chain is Protein ApaG, found in Nitrosomonas europaea (strain ATCC 19718 / CIP 103999 / KCTC 2705 / NBRC 14298).